The primary structure comprises 963 residues: Ubiquitin carboxyl-terminal hydrolase 11 (963 aa).

The disordered stretch occupies residues 64 to 93; sequence VTEDREPQHEELPGLDSQWRQIENGESGRE. Residues 65–75 show a composition bias toward basic and acidic residues; that stretch reads TEDREPQHEEL. Residues 76–184 enclose the DUSP domain; that stretch reads PGLDSQWRQI…GQPPIERKVI (109 aa). The residue at position 245 (Lys245) is an N6-acetyllysine. Residues 309 to 930 form the USP domain; that stretch reads CGLTNLGNTC…AAYVLFYQRQ (622 aa). The active-site Nucleophile is Cys318. Disordered regions lie at residues 644 to 691 and 716 to 735; these read TKPN…SGVT and LFTLQTVNSNGTSDRTTSPE. Phosphoserine is present on Ser648. Positions 649-665 are enriched in acidic residues; that stretch reads DDEDDGDEKEDDEEDKD. The span at 717–731 shows a compositional bias: polar residues; it reads FTLQTVNSNGTSDRT. At Ser733 the chain carries Phosphoserine. The active-site Proton acceptor is His888. Low complexity predominate over residues 938-957; it reads SPAGSSGAPASPACSSPPSS. The segment at 938–963 is disordered; that stretch reads SPAGSSGAPASPACSSPPSSEFMDVN. Phosphoserine is present on Ser948.

The protein belongs to the peptidase C19 family. As to quaternary structure, monomer. Associated component of the Polycomb group (PcG) multiprotein PRC1-like complex. Interacts with RANBP9/RANBPM. Interacts with BRCA2. Interacts with CHUK/IKKA. Interacts with NFKBIA. Interacts with SPRY3, RAE1, MYCBP2/PAM, and KCTD6. In terms of assembly, (Microbial infection) Interacts with papilloma virus protein 16E7.

The protein localises to the nucleus. It is found in the cytoplasm. The protein resides in the chromosome. It catalyses the reaction Thiol-dependent hydrolysis of ester, thioester, amide, peptide and isopeptide bonds formed by the C-terminal Gly of ubiquitin (a 76-residue protein attached to proteins as an intracellular targeting signal).. Protease that can remove conjugated ubiquitin from target proteins and polyubiquitin chains. Inhibits the degradation of target proteins by the proteasome. Cleaves preferentially 'Lys-6' and 'Lys-63'-linked ubiquitin chains. Has lower activity with 'Lys-11' and 'Lys-33'-linked ubiquitin chains, and extremely low activity with 'Lys-27', 'Lys-29' and 'Lys-48'-linked ubiquitin chains (in vitro). Plays a role in the regulation of pathways leading to NF-kappa-B activation. Plays a role in the regulation of DNA repair after double-stranded DNA breaks. Acts as a chromatin regulator via its association with the Polycomb group (PcG) multiprotein PRC1-like complex; may act by deubiquitinating components of the PRC1-like complex. Promotes cell proliferation by deubiquitinating phosphorylated E2F1. This is Ubiquitin carboxyl-terminal hydrolase 11 (USP11) from Homo sapiens (Human).